A 915-amino-acid chain; its full sequence is Transferrin-binding protein A (915 aa).

Positions 1-24 (MQQQHLFRFNILCLSLMTALPAYA) are cleaved as a signal peptide. Topologically, residues 25-187 (ENVQAGQAQE…ADDVIGEGRQ (163 aa)) are periplasmic. The TonB box signature appears at 38–45 (DTIQVKAK). One can recognise a TBDR plug domain in the interval 51 to 176 (RDNEVTGLGK…LAGSVAFQTK (126 aa)). The plug loop, interacts with transferrin stretch occupies residues 121–139 (SYTAQAALGGTRTAGSSGA). Positions 187 to 915 (QWGIQSKTAY…NYTFSLEMKF (729 aa)) constitute a TBDR beta-barrel domain. The chain crosses the membrane as a beta stranded span at residues 188 to 197 (WGIQSKTAYS). Topologically, residues 198 to 203 (GKNRGL) are extracellular. The chain crosses the membrane as a beta stranded span at residues 204–213 (TQSIALAGRI). The Periplasmic segment spans residues 214 to 215 (GG). A beta stranded membrane pass occupies residues 216–225 (AEALLIHTGR). Residues 226-309 (RAGEIRAHED…FLADPLSYES (84 aa)) lie on the Extracellular side of the membrane. A beta stranded membrane pass occupies residues 310 to 319 (RSWLFRPGFR). The Periplasmic portion of the chain corresponds to 320-324 (FENKR). The beta stranded transmembrane segment at 325–334 (HYIGGILEHT) threads the bilayer. Residues 335–406 (QQTFDTRDMT…VFYDETHTKS (72 aa)) lie on the Extracellular side of the membrane. The tract at residues 351–361 (KAVFDANKKQA) is L3 helix finger, interacts with transferrin. The chain crosses the membrane as a beta stranded span at residues 407–415 (RYGLEYVYT). The Periplasmic portion of the chain corresponds to 416–423 (NADKDTWA). The chain crosses the membrane as a beta stranded span at residues 424 to 433 (DYARLSYDRQ). Topologically, residues 434-478 (GIGLDNHFQQTHCSADGSDKYCRPSADKPFSYYKSDRVIYGESHR) are extracellular. The chain crosses the membrane as a beta stranded span at residues 479–488 (LLQAAFKKSF). Residues 489-494 (DTAKIR) are Periplasmic-facing. A beta stranded transmembrane segment spans residues 495-504 (HNLSVNLGFD). Residues 505 to 583 (RFGSNLRHQD…PRSINGKSYY (79 aa)) are Extracellular-facing. The segment at 523–542 (AYSSNTPPQNNGKKISPNGS) is disordered. The beta stranded transmembrane segment at 584 to 592 (AAVRDNVRL) threads the bilayer. The Periplasmic portion of the chain corresponds to 593 to 594 (GR). Residues 595 to 603 (WADVGAGLR) traverse the membrane as a beta stranded segment. Residues 604–623 (YDYRSTHSDDGSVSTGTHRT) lie on the Extracellular side of the membrane. Residues 624 to 633 (LSWNAGIVLK) form a beta stranded membrane-spanning segment. Residues 634–637 (PTDW) are Periplasmic-facing. The chain crosses the membrane as a beta stranded span at residues 638–647 (LDLTYRTSTG). Residues 648–675 (FRLPSFAEMYGWRAGVQSKAVKIDPEKS) are Extracellular-facing. A beta stranded membrane pass occupies residues 676–685 (FNKEAGIVFK). The Periplasmic portion of the chain corresponds to 686–689 (GDFG). Residues 690–699 (NLEASWFNNA) form a beta stranded membrane-spanning segment. The Extracellular segment spans residues 700–733 (YRDLIVRGYEAQIKDGKEEAKGDPAYLNAQSARI). A beta stranded transmembrane segment spans residues 734-743 (TGINILGKID). Residues 744–755 (WNGVWDKLPEGW) lie on the Periplasmic side of the membrane. Residues 756–765 (YSTFAYNRVR) form a beta stranded membrane-spanning segment. Residues 766 to 790 (VRDIKKRADRTDIQSHLFDAIQPSR) are Extracellular-facing. The beta stranded transmembrane segment at 791 to 799 (YVVGLGYDQ) threads the bilayer. Topologically, residues 800-802 (PEG) are periplasmic. The chain crosses the membrane as a beta stranded span at residues 803–811 (KWGVNGMLT). At 812–845 (YSKAKEITELLGSRALLNGNSRNTKATARRTRPW) the chain is on the extracellular side. The beta stranded transmembrane segment at 846–855 (YIVDVSGYYT) threads the bilayer. The Periplasmic segment spans residues 856 to 860 (VKKHF). Residues 861–870 (TLRAGVYNLL) traverse the membrane as a beta stranded segment. At 871-905 (NYRYVTWENVRQTAGGAVNQHKNVGVYNRYAAPGR) the chain is on the extracellular side. Positions 898–915 (NRYAAPGRNYTFSLEMKF) match the TonB C-terminal box motif. The beta stranded transmembrane segment at 906-915 (NYTFSLEMKF) threads the bilayer.

The protein belongs to the TonB-dependent receptor family. Binds both human apo- and holo-transferrin (TF), via the TF C-terminus. Forms a large complex with TF and TbpB.

Its subcellular location is the cell outer membrane. Its function is as follows. Neisseria acquires iron by extracting it from serum transferrin (TF) in its human host. Acts as a TF receptor and is required for TF utilization. Binds both apo- and holo-TF, via the TF C-terminus. The chain is Transferrin-binding protein A from Neisseria meningitidis serogroup B (strain ATCC BAA-335 / MC58).